Consider the following 248-residue polypeptide: MDQRQRRILGQPLSIPTSQPKQKRTSLISFFSKVSWKLRFQKREPLKNVLFILAERARDPNANKRHTAMRGLGTMAREAPDKVRKHKKIVLDLLVYGLYDPVSLEVIHESMKTLTVVLGKIQGKGLGSFFIDITLQTRTLLDDENDSLRYSAFVLFGQLAAFAGRKWKKFFTGQVKQTRDSLLIHLQDRNPQVAKACKTTFRACSPYLKLRKEYSFQSEEDQRNIKLYRQLSHYHPEILQFFYANKIL.

The tract at residues 1-20 (MDQRQRRILGQPLSIPTSQP) is disordered. 2 HEAT repeats span residues 44 to 79 (EPLKNVLFILAERARDPNANKRHTAMRGLGTMAREA) and 128 to 163 (SFFIDITLQTRTLLDDENDSLRYSAFVLFGQLAAFA).

Its subcellular location is the nucleus. It is found in the nucleolus. This Macaca fascicularis (Crab-eating macaque) protein is Protein maestro (MRO).